Here is a 272-residue protein sequence, read N- to C-terminus: MAGKNMSSRLLNMKFMQRASASTPTTPTTPDGTRPSKRLRTEAAPSPETRAFQEAAAAEEAKKNAFIERAAAEAGETKWVLSVSDDKPKTAGQGLRIVEAGYGAIDSGAPIPESDDDQDEEQSAGMAGRRSFGKFNKAVERQHNPDLSSPESEQDSDASSDSDSDDDEDLDEAELLIKAERKEAAAKLRAERKAQRKADEVKSKQMAERRRSRDINLNKVGGISNAAIRNKQANVANMACHVCGQKGHLQKDCPDRKQRRGDKRKSGGAMDY.

A compositionally biased stretch (polar residues) spans 1–10 (MAGKNMSSRL). Disordered stretches follow at residues 1–49 (MAGK…SPET), 102–215 (YGAI…SRDI), and 246–272 (KGHLQKDCPDRKQRRGDKRKSGGAMDY). Composition is skewed to acidic residues over residues 113 to 122 (ESDDDQDEEQ) and 152 to 174 (SEQDSDASSDSDSDDDEDLDEAE). Residues 175–215 (LLIKAERKEAAAKLRAERKAQRKADEVKSKQMAERRRSRDI) show a composition bias toward basic and acidic residues. Residues 240–255 (CHVCGQKGHLQKDCPD) form a CCHC-type zinc finger.

It is found in the nucleus. In terms of biological role, transcription factor; part of the gene cluster that mediates the biosynthesis of liamocins, glycolipids (also called heavy oils) composed of a single mannitol or arabitol headgroup linked to either three, four or even six 3,5-dihydroxydecanoic ester tail-groups. Positively regulates the expression of PKS1 and EST1 that mediate the biosynthesis of liamocins. This Aureobasidium melanogenum (Aureobasidium pullulans var. melanogenum) protein is Transcription factor GAL1.